Reading from the N-terminus, the 143-residue chain is Transcriptional regulator MraZ (143 aa).

SpoVT-AbrB domains lie at 5 to 47 (TYTP…PKEE) and 76 to 119 (ADEQ…DAQA).

This sequence belongs to the MraZ family. As to quaternary structure, forms oligomers.

Its subcellular location is the cytoplasm. It is found in the nucleoid. The sequence is that of Transcriptional regulator MraZ from Corynebacterium efficiens (strain DSM 44549 / YS-314 / AJ 12310 / JCM 11189 / NBRC 100395).